The following is a 147-amino-acid chain: Small ribosomal subunit protein uS12 (147 aa).

This sequence belongs to the universal ribosomal protein uS12 family. As to quaternary structure, part of the 30S ribosomal subunit.

Its function is as follows. With S4 and S5 plays an important role in translational accuracy. Located at the interface of the 30S and 50S subunits. The polypeptide is Small ribosomal subunit protein uS12 (Sulfolobus acidocaldarius (strain ATCC 33909 / DSM 639 / JCM 8929 / NBRC 15157 / NCIMB 11770)).